The chain runs to 428 residues: L-gulono-1,4-lactone dehydrogenase (428 aa).

The FAD-binding PCMH-type domain occupies 12 to 179 (QVCAPSAIVR…SQVTLQTVPL (168 aa)).

Belongs to the oxygen-dependent FAD-linked oxidoreductase family. A divalent metal cation is required as a cofactor.

It carries out the reaction L-gulono-1,4-lactone + 2 Fe(III)-[cytochrome c] = L-ascorbate + 2 Fe(II)-[cytochrome c] + 3 H(+). It functions in the pathway cofactor biosynthesis; L-ascorbate biosynthesis. Functionally, oxidizes L-gulono-1,4-lactone to L-xylo-hexulonolactone which spontaneously isomerizes to L-ascorbate. This Mycobacterium tuberculosis (strain CDC 1551 / Oshkosh) protein is L-gulono-1,4-lactone dehydrogenase.